Reading from the N-terminus, the 661-residue chain is Galactan 5-O-arabinofuranosyltransferase (661 aa).

Transmembrane regions (helical) follow at residues L26 to G46, V64 to L84, A108 to I128, A194 to W214, I217 to A237, P243 to A263, G265 to T285, L286 to V306, P312 to G332, V362 to V382, M393 to L413, L418 to I438, and T458 to A478.

It belongs to the glycosyltransferase 85 family.

Its subcellular location is the cell membrane. It carries out the reaction Adds an alpha-D-arabinofuranosyl group from trans,octacis-decaprenylphospho-beta-D-arabinofuranose at the 5-O-position of the eighth, tenth and twelfth galactofuranose unit of the galactofuranan chain of [beta-D-galactofuranosyl-(1-&gt;5)-beta-D-galactofuranosyl-(1-&gt;6)]14-beta-D-galactofuranosyl-(1-&gt;5)-beta-D-galactofuranosyl-(1-&gt;4)-alpha-L-rhamnopyranosyl-(1-&gt;3)-N-acetyl-alpha-D-glucosaminyl-diphospho-trans,octacis-decaprenol.. The protein operates within cell wall biogenesis; cell wall polysaccharide biosynthesis. In terms of biological role, involved in the biosynthesis of the arabinogalactan (AG) region of the mycolylarabinogalactan-peptidoglycan (mAGP) complex, an essential component of the cell wall. Catalyzes the addition of the first key arabinofuranosyl (Araf) residue from the sugar donor decaprenyl-phospho-arabinose (DPA) on the C-5 of a 6-linked galactofuranosyl (Galf) of the galactan domain, thus 'priming' the galactan for further elaboration by other arabinofuranosyltransferases. The chain is Galactan 5-O-arabinofuranosyltransferase from Corynebacterium glutamicum (strain ATCC 13032 / DSM 20300 / JCM 1318 / BCRC 11384 / CCUG 27702 / LMG 3730 / NBRC 12168 / NCIMB 10025 / NRRL B-2784 / 534).